The sequence spans 2038 residues: Homeotic protein female sterile (2038 aa).

Residues 34–140 form the Bromo 1 domain; sequence RNTNQLQYLI…KVFLQKIESM (107 aa). Residues 145-284 are disordered; the sequence is LELEPVTAKG…TTAMAGGVGG (140 aa). 2 stretches are compositionally biased toward low complexity: residues 177–209 and 268–279; these read GSGTSSAAVTSGPGSGSTKVSVAASSAQQSGLQ and PGSTNTTTTAMA. A helical transmembrane segment spans residues 330-350; that stretch reads AAVAAAAAAAAAAAAAAGGAA. The tract at residues 396–432 is disordered; the sequence is KGVKRKADTTTPTANAFESPYTQMDSKSAKIATRRES. Residues 404–421 are compositionally biased toward polar residues; that stretch reads TTTPTANAFESPYTQMDS. A helical transmembrane segment spans residues 451 to 471; sequence VSGVPGLGGLVAGGVAGVAVA. Serine 452 carries the post-translational modification Phosphoserine. Positions 475 to 584 constitute a Bromo 2 domain; the sequence is EKLSDALKSC…DVFEMRYANI (110 aa). Disordered stretches follow at residues 590–655 and 677–735; these read ANAA…ERSA and EASA…SVPG. Residues 593 to 619 are compositionally biased toward basic residues; sequence AHHHGHGHGHGHGHGHGHGHGHGHGHG. Over residues 636 to 649 the composition is skewed to acidic residues; it reads SSEDSSDTENESNS. Residues 681-694 are compositionally biased toward basic residues; the sequence is KKKAKKKLKEKKKS. A compositionally biased stretch (gly residues) spans 711–735; sequence TGGGANAGGAGGPGSGGHGSVSVPG. The next 3 membrane-spanning stretches (helical) occupy residues 750-770, 790-810, and 816-830; these read LNALLGGSLVGHGGAAVAGGV, MAGGGAAAGAGFGAGVTAAGA, and AGTLAGALAAGAAAG. Disordered regions lie at residues 832 to 858, 891 to 956, 1016 to 1139, 1217 to 1260, 1384 to 1416, 1502 to 1530, 1580 to 1616, 1645 to 1728, 1745 to 1918, and 1957 to 2023; these read GGTTAGSGSSKGAKSKGGRGAKGSGAG, AGAA…SYDE, CLRK…GGNL, AVSA…ATVA, QPAGPQQQQQQQQQQPFGHQQQQQQQQQQQQQQ, MQQMQLQQQHHQQQQQQTHQQQQQHQQQH, IESMMPSPPDKQQLQQHQKVLPPQQSPSDMKLHPNAA, WSSL…VAQA, AAAA…SGAI, and MESG…GQID. The chain crosses the membrane as a helical span at residues 874–894; sequence GAAGAAAGAGSVGGVGGAGAA. A compositionally biased stretch (gly residues) spans 910 to 927; that stretch reads GAGGGVGGANASAGGAGA. The NET domain maps to 942 to 1024; it reads DSEEEDTAKP…SCLRKKTHKK (83 aa). Serine 943 bears the Phosphoserine mark. The span at 1017-1027 shows a compositional bias: basic residues; sequence LRKKTHKKPSG. The span at 1028–1046 shows a compositional bias: basic and acidic residues; that stretch reads KSKDEQMAEKKQELEKRLQ. Residues 1079–1100 are compositionally biased toward low complexity; sequence SSSSSSSDSSSSSSSDSSSSDS. Composition is skewed to polar residues over residues 1121-1131 and 1222-1232; these read SNGSNVNNPSI and TGQQHNKNGPN. Low complexity predominate over residues 1645–1665; it reads WSSLASANSPQSHTSSSSSSS. A Phosphoserine modification is found at serine 1653. Residues 1680-1708 are compositionally biased toward basic and acidic residues; that stretch reads KAKERDRLKLLEAAEKEKKNQKEAAEKEQ. 2 stretches are compositionally biased toward low complexity: residues 1716–1728 and 1745–1760; these read SSSSLTSAAVAQA and AAAAALASSASNPSGG. The helical transmembrane segment at 1731-1751 threads the bilayer; it reads IAAATAAAAVTLGAAAAAALA. Residues 1776–1791 show a composition bias toward basic and acidic residues; it reads GDRDRDRDRERERERS. A compositionally biased stretch (low complexity) spans 1800 to 1813; that stretch reads NGNNSSNSANSNGP. 2 stretches are compositionally biased toward gly residues: residues 1814–1828 and 1835–1856; these read GSAGSGGSGGGGGSG and PNSGGGGTANSNSGGGGGGGGP. Residues 1857–1884 show a composition bias toward low complexity; sequence ALLNAGSNSNSGVGSGGAASSNSNSSVG. A compositionally biased stretch (gly residues) spans 1885–1915; that stretch reads GIVGSGGPGSNSQGSSGGGGGGPASGGGMGS. The chain crosses the membrane as a helical span at residues 1939-1959; it reads VAAAVAAQAILAASPLGAMES. Residues serine 1980 and serine 1988 each carry the phosphoserine modification. Low complexity predominate over residues 1986–1997; it reads QSSPAQQSPQDR. The segment covering 1998–2017 has biased composition (basic and acidic residues); that stretch reads AAAKRAEQRRAEQERRRREA.

The protein localises to the membrane. Required maternally for proper expression of other homeotic genes involved in pattern formation, such as Ubx. The sequence is that of Homeotic protein female sterile (fs(1)h) from Drosophila melanogaster (Fruit fly).